The following is a 958-amino-acid chain: Glycine dehydrogenase (decarboxylating) 2 (958 aa).

Lys707 bears the N6-(pyridoxal phosphate)lysine mark.

This sequence belongs to the GcvP family. As to quaternary structure, the glycine cleavage system is composed of four proteins: P, T, L and H. Pyridoxal 5'-phosphate is required as a cofactor.

The enzyme catalyses N(6)-[(R)-lipoyl]-L-lysyl-[glycine-cleavage complex H protein] + glycine + H(+) = N(6)-[(R)-S(8)-aminomethyldihydrolipoyl]-L-lysyl-[glycine-cleavage complex H protein] + CO2. The glycine cleavage system catalyzes the degradation of glycine. The P protein binds the alpha-amino group of glycine through its pyridoxal phosphate cofactor; CO(2) is released and the remaining methylamine moiety is then transferred to the lipoamide cofactor of the H protein. In Pseudomonas aeruginosa (strain ATCC 15692 / DSM 22644 / CIP 104116 / JCM 14847 / LMG 12228 / 1C / PRS 101 / PAO1), this protein is Glycine dehydrogenase (decarboxylating) 2 (gcvP2).